The following is a 1136-amino-acid chain: Coiled-coil domain-containing protein 136 (1136 aa).

Residues 1–46 (MQAMDGEVLLPALYEEEEEEEEEEEEVEEEQVEKGGSLGSLSMGKH) form a disordered region. Residues 14–31 (YEEEEEEEEEEEEVEEEQ) are compositionally biased toward acidic residues. S50 carries the post-translational modification Phosphoserine. 2 coiled-coil regions span residues 293-631 (VMQL…QNQE) and 681-730 (LQAL…QTQS). Disordered regions lie at residues 741 to 773 (GKNSGSRAPSTENFHRSYESSIDENEGYQKSYV), 814 to 837 (GSVSSGETLHRSYASSSTDEDPAE), 965 to 990 (NRPSISSEARGKNVNKNMNKNANGVR), and 1040 to 1111 (KKER…PDPP). The span at 743–752 (NSGSRAPSTE) shows a compositional bias: polar residues. Positions 839 to 972 (EDLEHFEETV…KENRPSISSE (134 aa)) form a coiled coil. The span at 976–989 (KNVNKNMNKNANGV) shows a compositional bias: low complexity. Residues 1017–1057 (YYKASQRRLDELMKEEKEIEEARKKEREKKAKKDLCKLATN) adopt a coiled-coil conformation. A compositionally biased stretch (basic and acidic residues) spans 1040-1052 (KKEREKKAKKDLC). Positions 1067–1091 (EPTEDEEENFEEYREGEDESCEAAE) are enriched in acidic residues. The chain crosses the membrane as a helical span at residues 1112 to 1132 (IFSLPLVGLVVISALLWCWWA).

As to expression, present at high level in testis (at protein level).

It localises to the cytoplasmic vesicle. It is found in the secretory vesicle. Its subcellular location is the acrosome membrane. May play a role in acrosome formation in spermatogenesis and in fertilization. This chain is Coiled-coil domain-containing protein 136 (Ccdc136), found in Mus musculus (Mouse).